The sequence spans 379 residues: GDSL esterase/lipase EXL2 (379 aa).

Residues 1–35 (MKRNSINIHHVTSFSSSPFWCVFFLVLLCKTSTNA) form the signal peptide. N-linked (GlcNAc...) asparagine glycosylation is present at N42. S54 functions as the Nucleophile in the catalytic mechanism. Catalysis depends on residues D358 and H361.

The protein belongs to the 'GDSL' lipolytic enzyme family.

It localises to the secreted. The sequence is that of GDSL esterase/lipase EXL2 (EXL2) from Arabidopsis thaliana (Mouse-ear cress).